Consider the following 53-residue polypeptide: Cytochrome c-552 (53 aa).

The heme c site is built by Cys19, Cys22, His23, and Met44.

Binds 1 heme c group covalently per subunit.

It localises to the cell membrane. This is Cytochrome c-552 from Schinkia azotoformans (Bacillus azotoformans).